The chain runs to 27 residues: Superoxide dismutase [Mn] (27 aa).

The protein belongs to the iron/manganese superoxide dismutase family. As to quaternary structure, homodimer. The cofactor is Mn(2+).

It catalyses the reaction 2 superoxide + 2 H(+) = H2O2 + O2. Functionally, destroys superoxide anion radicals which are normally produced within the cells and which are toxic to biological systems. This is Superoxide dismutase [Mn] (sodA) from Desulfovibrio desulfuricans.